The primary structure comprises 243 residues: MARNRTTSKKNVQSKRLIDRVVPMDKIKKVGVAKKKTVEHTKEGFSVVNGKLVSSNDVGVLLREAQGAIDKRTNVSQRNRKKGIKNNRPHKDINSSPDWGNAHRGTDWQSEKANGMNRAKNSRNFTTNIKLQRQHFGEEIQGGSQLVISTNSDASDKLLMLFNLTLGVNQENLKNVLENISQVQIAQIRVRDLPSGSATAKVRLAYPTTQSLEKVRKLFHGALVDGRRIQVVIASDESSHLSY.

The segment at 71-120 is disordered; it reads KRTNVSQRNRKKGIKNNRPHKDINSSPDWGNAHRGTDWQSEKANGMNRAK. The span at 78-88 shows a compositional bias: basic residues; sequence RNRKKGIKNNR. Serine 96 carries the post-translational modification Phosphoserine.

This is an uncharacterized protein from Saccharomyces cerevisiae (strain ATCC 204508 / S288c) (Baker's yeast).